The primary structure comprises 460 residues: ATP synthase subunit beta (460 aa).

An ATP-binding site is contributed by 148–155; it reads GGAGVGKT.

Belongs to the ATPase alpha/beta chains family. F-type ATPases have 2 components, CF(1) - the catalytic core - and CF(0) - the membrane proton channel. CF(1) has five subunits: alpha(3), beta(3), gamma(1), delta(1), epsilon(1). CF(0) has three main subunits: a(1), b(2) and c(9-12). The alpha and beta chains form an alternating ring which encloses part of the gamma chain. CF(1) is attached to CF(0) by a central stalk formed by the gamma and epsilon chains, while a peripheral stalk is formed by the delta and b chains.

It localises to the cell inner membrane. The enzyme catalyses ATP + H2O + 4 H(+)(in) = ADP + phosphate + 5 H(+)(out). Its function is as follows. Produces ATP from ADP in the presence of a proton gradient across the membrane. The catalytic sites are hosted primarily by the beta subunits. This is ATP synthase subunit beta from Alcanivorax borkumensis (strain ATCC 700651 / DSM 11573 / NCIMB 13689 / SK2).